A 1296-amino-acid polypeptide reads, in one-letter code: MAHFSSEDEVMLQAMLRQLFQSVKEKITGAPSLECAEEILLRLEETDENFHNYEFVKYLRQHICNMLGSMIEEEMEKCTSDQNQGEDSGYDTVVQHVTKRTQESKEYKEMMHSLKNIMMVVVEAMINKFEEDETRSEDRQRKMQSGSCCTDNCSDSDSSFNQSYKFCQGKLRLILDQLDPGQPKEVRYEALQTLCSAPPSDVLSCENWTTLCEKLTTSLSDPDPMFTDRILKFYAQTFTLSPLHMTKEIYTSLAKYLEVYFLSRENHLPTLSTGVDITSPNVTRLLKKVRLLNEYQKEAPSFWIRHPEKYMEEIVESTLSLLSVKHEQSHLVPQKILDPIYFFALVDTKAVWFKKWMHAYYSRTAVLRLLEKKYKCLITTAVQQCVQYLELCEAMKADEILRHPKHCGTKQKSFYYSGQELQYIYFIHSLCLLGRLLIYTQGRKLFPIKLKNRKDSVSLTNLLVLFTQLIYYSPSCPKMTSIMCSENYSPASMVTDVLRMLCDQKECAVECLYNSTVTEALLLPIHNLTKGTAAAPDCSETALIHIADILARIASVEEGLILLLYGENMNSSEEESLTGAHIIAKFSKKLLEEDISIFSGSEMLPVVKGAFISVCRQIYGTCEGLQVLLPYGLHESIAKAWKKTSLLSERIPTPVEGSDSVSSVSQVSPNSVAWEDNLLDDLLNFAATPKGLLLLQRTGAINECVTFMLSQYAKKPQVNRQKKFGYEVLVVQVASTAAGAVALQNSGFISALITELWSNLECGRDDVRLTHPRATPVDPIDRSCQKSFLALVNLLSYPAVYELTANQELPNKAEYSLREVPTCIIDIMDRLIVLNSEAKIRSLLNYEQSHTFGLRLLSVVCCDLDALLLLEAQYQVSNMLLHAQEENTFEISENHRNFIIDGLSVERNHVLVRINLIGGPSERILPPRMLEKGDDPYPWPMFSSYPLPHCYQSEGPRSADLKQDNDIGNLLSCFKMSDKQTEWIENCRRQFCKTMKSKPDAVHGSALGELLEKFVLLLTENPSECYFPSVEYTATDANVKNESLSSVQQLGMKMTVRYGRFLNLLKDGAENELALVLKHCEKFLKQQQSPVTSSLLCLQGNYAGHDWFVSSLFMIMLGDKGKTFHFLQHFSRLLTSAFLWVPRLHNSRYLPVDTLGTGIHPIYFCSAHYIEMLLKAEVPLVFSAFHMSGFAPSQICLQWITQCFWNYLDWIEICHYIATCVVLGPDYQVYVCIAVLKHLQRDILQHTQTQDLQVFLKEEALHGFRVSNYFEYMENLEQNYRPVLLRDMRSIRVQNT.

In terms of domain architecture, Rab-GAP TBC spans G1158–R1281.

As to quaternary structure, interacts with CDK20, which promotes CDK20 stability and function. Interacts with FAM149B1; may play a role in cilium assembly.

The protein localises to the cytoplasm. It is found in the cell projection. It localises to the cilium. In terms of biological role, required for high-level Shh responses in the developing neural tube. Together with CDK20, controls the structure of the primary cilium by coordinating assembly of the ciliary membrane and axoneme, allowing GLI2 to be properly activated in response to Shh signaling. The sequence is that of Protein broad-minded (Tbc1d32) from Mus musculus (Mouse).